A 375-amino-acid chain; its full sequence is UDP-N-acetylglucosamine--N-acetylmuramyl-(pentapeptide) pyrophosphoryl-undecaprenol N-acetylglucosamine transferase (375 aa).

UDP-N-acetyl-alpha-D-glucosamine is bound by residues 15–17, Asn-126, Arg-169, Ser-197, and Gln-298; that span reads TGG.

Belongs to the glycosyltransferase 28 family. MurG subfamily.

Its subcellular location is the cell inner membrane. The catalysed reaction is di-trans,octa-cis-undecaprenyl diphospho-N-acetyl-alpha-D-muramoyl-L-alanyl-D-glutamyl-meso-2,6-diaminopimeloyl-D-alanyl-D-alanine + UDP-N-acetyl-alpha-D-glucosamine = di-trans,octa-cis-undecaprenyl diphospho-[N-acetyl-alpha-D-glucosaminyl-(1-&gt;4)]-N-acetyl-alpha-D-muramoyl-L-alanyl-D-glutamyl-meso-2,6-diaminopimeloyl-D-alanyl-D-alanine + UDP + H(+). The protein operates within cell wall biogenesis; peptidoglycan biosynthesis. Its function is as follows. Cell wall formation. Catalyzes the transfer of a GlcNAc subunit on undecaprenyl-pyrophosphoryl-MurNAc-pentapeptide (lipid intermediate I) to form undecaprenyl-pyrophosphoryl-MurNAc-(pentapeptide)GlcNAc (lipid intermediate II). This chain is UDP-N-acetylglucosamine--N-acetylmuramyl-(pentapeptide) pyrophosphoryl-undecaprenol N-acetylglucosamine transferase, found in Rhodopseudomonas palustris (strain BisB18).